A 121-amino-acid chain; its full sequence is uncharacterized protein (121 aa).

The protein localises to the mitochondrion. This is an uncharacterized protein from Arabidopsis thaliana (Mouse-ear cress).